A 172-amino-acid polypeptide reads, in one-letter code: Ribosome maturation factor RimM (172 aa).

The region spanning 92 to 167 is the PRC barrel domain; it reads ENEFYHSDLV…VILKLPEIIG (76 aa).

It belongs to the RimM family. Binds ribosomal protein uS19.

The protein localises to the cytoplasm. In terms of biological role, an accessory protein needed during the final step in the assembly of 30S ribosomal subunit, possibly for assembly of the head region. Essential for efficient processing of 16S rRNA. May be needed both before and after RbfA during the maturation of 16S rRNA. It has affinity for free ribosomal 30S subunits but not for 70S ribosomes. The protein is Ribosome maturation factor RimM of Ehrlichia ruminantium (strain Gardel).